Consider the following 143-residue polypeptide: Transcriptional regulator MraZ (143 aa).

SpoVT-AbrB domains follow at residues 5–47 (QYEH…SLEE) and 76–119 (AVEC…SKEV).

This sequence belongs to the MraZ family. As to quaternary structure, forms oligomers.

It is found in the cytoplasm. The protein resides in the nucleoid. This Thermoanaerobacter pseudethanolicus (strain ATCC 33223 / 39E) (Clostridium thermohydrosulfuricum) protein is Transcriptional regulator MraZ.